We begin with the raw amino-acid sequence, 66 residues long: Small ribosomal subunit protein bS21 (66 aa).

Belongs to the bacterial ribosomal protein bS21 family.

In Rickettsia typhi (strain ATCC VR-144 / Wilmington), this protein is Small ribosomal subunit protein bS21.